The chain runs to 359 residues: MATH domain and coiled-coil domain-containing protein At2g42475 (359 aa).

Residues 6–128 (KTSFTFEIEN…NDKLIITVEV (123 aa)) form the MATH domain. Residues 146–337 (EFKELQDLYN…NLELMVLDFK (192 aa)) adopt a coiled-coil conformation.

In Arabidopsis thaliana (Mouse-ear cress), this protein is MATH domain and coiled-coil domain-containing protein At2g42475.